Consider the following 384-residue polypeptide: Putative RNA methyltransferase slr0064 (384 aa).

The THUMP domain occupies 53 to 164; the sequence is LLYRINLWSR…QNHCQLSLDS (112 aa).

It belongs to the methyltransferase superfamily.

This is Putative RNA methyltransferase slr0064 from Synechocystis sp. (strain ATCC 27184 / PCC 6803 / Kazusa).